We begin with the raw amino-acid sequence, 2144 residues long: HEAT repeat-containing protein 1 (2144 aa).

Residue M1 is modified to N-acetylmethionine. At T2 the chain carries N-acetylthreonine; in HEAT repeat-containing protein 1, N-terminally processed. Phosphoserine is present on S516. The stretch at 913 to 951 (ASISSPVVTSLLINLGSPVKEVRRAAIQCLQALSGVASP) is one HEAT 1 repeat. The tract at residues 1170–1191 (KAKPLGTVQQKRRQKMQQKKSQ) is disordered. A Phosphoserine modification is found at S1190. The HEAT 2 repeat unit spans residues 1347–1385 (NKTVKMVIPALIQSDSGDSIEVSRNVEEIVVKIISVFVD). Residue S1492 is modified to Phosphoserine. HEAT repeat units follow at residues 1594-1632 (LLPTETFIPVIRGLVGNPLPSVRRKALDLLNNKLQQNIS), 1730-1770 (IPQL…VVET), and 2100-2138 (IVLLPESIPFLAELMEDECEEVEHQCQKTIQQLETVLGE).

Belongs to the HEATR1/UTP10 family. Part of the small subunit (SSU) processome, composed of more than 70 proteins and the RNA chaperone small nucleolar RNA (snoRNA) U3. Interacts with MYC; the interaction is required for localization of MYC to the nucleolus.

The protein localises to the nucleus. It is found in the nucleolus. Functionally, ribosome biogenesis factor; required for recruitment of Myc to nucleoli. Involved in nucleolar processing of pre-18S ribosomal RNA. Required for optimal pre-ribosomal RNA transcription by RNA polymerase I. Part of the small subunit (SSU) processome, first precursor of the small eukaryotic ribosomal subunit. During the assembly of the SSU processome in the nucleolus, many ribosome biogenesis factors, an RNA chaperone and ribosomal proteins associate with the nascent pre-rRNA and work in concert to generate RNA folding, modifications, rearrangements and cleavage as well as targeted degradation of pre-ribosomal RNA by the RNA exosome. Involved in neuronal-lineage cell proliferation. This chain is HEAT repeat-containing protein 1, found in Homo sapiens (Human).